Consider the following 497-residue polypeptide: uncharacterized protein (497 aa).

Ca(2+) is bound by residues Asp-12, Thr-13, and Cys-52. Catalysis depends on Cys-52, which acts as the Nucleophile. Residue Cys-52 is modified to 3-oxoalanine (Cys). His-102 is an active-site residue. The Ca(2+) site is built by Asp-284 and His-285.

The protein belongs to the sulfatase family. Requires Ca(2+) as cofactor. The conversion to 3-oxoalanine (also known as C-formylglycine, FGly), of a serine or cysteine residue in prokaryotes and of a cysteine residue in eukaryotes, is critical for catalytic activity.

This is an uncharacterized protein from Escherichia coli (strain K12).